We begin with the raw amino-acid sequence, 755 residues long: Actin-related protein 5 (755 aa).

Residue S7 is modified to Phosphoserine. K12 participates in a covalent cross-link: Glycyl lysine isopeptide (Lys-Gly) (interchain with G-Cter in ubiquitin). T24 carries the post-translational modification Phosphothreonine. S383 is modified (phosphoserine). The segment at 418 to 444 is disordered; the sequence is QRFLKASQDARQKAKEEKERVAKEEEE. Residues 425–444 show a composition bias toward basic and acidic residues; that stretch reads QDARQKAKEEKERVAKEEEE.

The protein belongs to the actin family. In terms of assembly, component of the chromatin-remodeling INO80 complex, at least composed of ARP4, ARP5, ARP8, RVB1, RVB2, TAF14, NHP10, IES1, IES3, IES4, IES6, ACT1, IES2, IES5 and INO80.

The protein resides in the nucleus. Functionally, probably involved in transcription regulation via its interaction with the INO80 complex, a chromatin remodeling complex. The polypeptide is Actin-related protein 5 (ARP5) (Saccharomyces cerevisiae (strain ATCC 204508 / S288c) (Baker's yeast)).